The following is a 308-amino-acid chain: Tryptophan 2,3-dioxygenase (308 aa).

Residues 1–35 (MQPPGDNAPAGCPFSGAHAAQPAHEAPHVPGDAAG) form a disordered region. Over residues 17 to 30 (AHAAQPAHEAPHVP) the composition is skewed to low complexity. Substrate is bound by residues 77–81 (FIIQH), tyrosine 139, and arginine 143. Residue histidine 266 participates in heme binding. Threonine 280 contacts substrate.

Belongs to the tryptophan 2,3-dioxygenase family. In terms of assembly, homotetramer. It depends on heme as a cofactor.

It catalyses the reaction L-tryptophan + O2 = N-formyl-L-kynurenine. The protein operates within amino-acid degradation; L-tryptophan degradation via kynurenine pathway; L-kynurenine from L-tryptophan: step 1/2. Functionally, heme-dependent dioxygenase that catalyzes the oxidative cleavage of the L-tryptophan (L-Trp) pyrrole ring and converts L-tryptophan to N-formyl-L-kynurenine. Catalyzes the oxidative cleavage of the indole moiety. The sequence is that of Tryptophan 2,3-dioxygenase from Burkholderia ambifaria (strain ATCC BAA-244 / DSM 16087 / CCUG 44356 / LMG 19182 / AMMD) (Burkholderia cepacia (strain AMMD)).